Reading from the N-terminus, the 945-residue chain is Isoleucine--tRNA ligase (945 aa).

The 'HIGH' region signature appears at Pro66–His76. Glu581 is an L-isoleucyl-5'-AMP binding site. Residues Lys622 to Ser626 carry the 'KMSKS' region motif. Lys625 contacts ATP. The Zn(2+) site is built by Cys908, Cys911, Cys928, and Cys931.

Belongs to the class-I aminoacyl-tRNA synthetase family. IleS type 1 subfamily. In terms of assembly, monomer. Zn(2+) serves as cofactor.

The protein resides in the cytoplasm. The catalysed reaction is tRNA(Ile) + L-isoleucine + ATP = L-isoleucyl-tRNA(Ile) + AMP + diphosphate. Its function is as follows. Catalyzes the attachment of isoleucine to tRNA(Ile). As IleRS can inadvertently accommodate and process structurally similar amino acids such as valine, to avoid such errors it has two additional distinct tRNA(Ile)-dependent editing activities. One activity is designated as 'pretransfer' editing and involves the hydrolysis of activated Val-AMP. The other activity is designated 'posttransfer' editing and involves deacylation of mischarged Val-tRNA(Ile). This Burkholderia ambifaria (strain MC40-6) protein is Isoleucine--tRNA ligase.